A 530-amino-acid chain; its full sequence is 6-phosphofructo-2-kinase/fructose-2,6-bisphosphatase 2 (530 aa).

Residues 1 to 15 (MSGASSSEQNNNSYE) show a composition bias toward polar residues. The interval 1–21 (MSGASSSEQNNNSYETKPPNL) is disordered. At Ser-2 the chain carries N-acetylserine. The 6-phosphofructo-2-kinase stretch occupies residues 2 to 248 (SGASSSEQNN…VYYLMNIHVQ (247 aa)). Ser-29 bears the Phosphoserine; by PKA mark. 45 to 53 (GLPARGKTY) serves as a coordination point for ATP. Positions 78 and 102 each coordinate beta-D-fructose 6-phosphate. Residue Asp-128 is part of the active site. 2 residues coordinate beta-D-fructose 6-phosphate: Thr-130 and Arg-136. Cys-158 is an active-site residue. 167–172 (NILEVK) lines the ATP pocket. Lys-172, Arg-193, and Tyr-197 together coordinate beta-D-fructose 6-phosphate. The fructose-2,6-bisphosphatase stretch occupies residues 249 to 530 (PRTIYLCRHG…PPALASCPCH (282 aa)). Beta-D-fructose 2,6-bisphosphate is bound at residue Arg-256. The Tele-phosphohistidine intermediate role is filled by His-257. Gly-269 contributes to the beta-D-fructose 2,6-bisphosphate binding site. Glu-326 acts as the Proton donor/acceptor in catalysis. Residues Tyr-337, Arg-351, Lys-355, Tyr-366, Gln-392, and Arg-396 each coordinate beta-D-fructose 2,6-bisphosphate. 348-351 (FALR) lines the ATP pocket. ATP-binding positions include 392–396 (QAVMR) and Tyr-428. The disordered stretch occupies residues 446-512 (RDKPTNNFPK…GPTSRRPKSH (67 aa)). Residues 450-476 (TNNFPKNQTPVRMRRNSFTPLSSSNTI) show a composition bias toward polar residues. The residue at position 466 (Ser-466) is a Phosphoserine; by AMPK and PKA. Position 468 is a phosphothreonine (Thr-468). A Phosphothreonine; by PKC modification is found at Thr-475. Ser-483 and Ser-493 each carry phosphoserine.

The protein in the C-terminal section; belongs to the phosphoglycerate mutase family. In terms of assembly, homodimer. Forms a heterodimer with PFKFB3. In terms of processing, phosphorylation by AMPK stimulates activity.

The enzyme catalyses beta-D-fructose 2,6-bisphosphate + H2O = beta-D-fructose 6-phosphate + phosphate. It catalyses the reaction beta-D-fructose 6-phosphate + ATP = beta-D-fructose 2,6-bisphosphate + ADP + H(+). Phosphorylation results in the activation of the kinase activity. Functionally, synthesis and degradation of fructose 2,6-bisphosphate. The chain is 6-phosphofructo-2-kinase/fructose-2,6-bisphosphatase 2 (PFKFB2) from Pongo abelii (Sumatran orangutan).